The sequence spans 50 residues: Large ribosomal subunit protein bL33 (50 aa).

It belongs to the bacterial ribosomal protein bL33 family.

The chain is Large ribosomal subunit protein bL33 from Endomicrobium trichonymphae.